Here is a 252-residue protein sequence, read N- to C-terminus: Imidazole glycerol phosphate synthase subunit HisF (252 aa).

Catalysis depends on residues aspartate 11 and aspartate 130.

Belongs to the HisA/HisF family. Heterodimer of HisH and HisF.

The protein localises to the cytoplasm. It carries out the reaction 5-[(5-phospho-1-deoxy-D-ribulos-1-ylimino)methylamino]-1-(5-phospho-beta-D-ribosyl)imidazole-4-carboxamide + L-glutamine = D-erythro-1-(imidazol-4-yl)glycerol 3-phosphate + 5-amino-1-(5-phospho-beta-D-ribosyl)imidazole-4-carboxamide + L-glutamate + H(+). The protein operates within amino-acid biosynthesis; L-histidine biosynthesis; L-histidine from 5-phospho-alpha-D-ribose 1-diphosphate: step 5/9. Its function is as follows. IGPS catalyzes the conversion of PRFAR and glutamine to IGP, AICAR and glutamate. The HisF subunit catalyzes the cyclization activity that produces IGP and AICAR from PRFAR using the ammonia provided by the HisH subunit. This chain is Imidazole glycerol phosphate synthase subunit HisF, found in Aromatoleum aromaticum (strain DSM 19018 / LMG 30748 / EbN1) (Azoarcus sp. (strain EbN1)).